The sequence spans 578 residues: MLASLQSEQGLVYLNASSWLDEQQAAKALTRDQLRERVLGQGERIFIDFSGITDKAEPEQARKAMEQLAGISFDADWVLVSAYKGELLFTPLGPPDDPAFYQVMERIDTLAGQGKRHKRSLTQTATAEAGLPRGAFYLKLNRKISVAECTFPRSRTWDRGDRLFCDSPNISLVYRVNLERSLQFGNTGSATPDAKIVRISLDDESAGGGIQLNEDLTWSENIADYLLLDGWARDYATDAIAQDYRFTIDASNTKAAVLKSLPTNLNSKYEHRRISGFEVGVTGGVEVNKDGPKASWRRRPSSASSVTMPTTPRIIGSNARPECPEGEFQLGAGSIRDGGVTALLQDRHRLGNGVRCGSQPHPAAELQGLRAESGCHLQGGADETGSTEFKIDSSVNIRPIYTGIYKHYYVVGGHVSFQGFEDVDKRRRVTASTSFKVDWNHPVFTGGRPVNLQLGGFDNRCLSAGAEHGLSAVTCDETSAAQSFIYDQYGRYVSALDTRRCLDGNNLGQLQSCRLSLGQRWEWKADSDALSNLSAHQLLGHNKQTGELALYDENGNPADVSVRTLTSYTRILRATAGN.

Positions 289 to 322 (KDGPKASWRRRPSSASSVTMPTTPRIIGSNARPE) are disordered. A Ricin B-type lectin domain is found at 448 to 539 (RPVNLQLGGF…LSNLSAHQLL (92 aa)).

It belongs to the HlyA hemolysin family.

Functionally, bacterial hemolysins are exotoxins that attack blood cell membranes and cause cell rupture by mechanisms not clearly defined. This is Hemolysin 4 (ash4) from Aeromonas salmonicida.